A 226-amino-acid chain; its full sequence is METVVIVAIGVLATIFLASFAALVLVCRQRYCRPRDLLQRYDSKPIVDLIGAMETQSEPSELELDDVVITNPHIEAILENEDWIEDASGLMSHCIAILKICHTLTEKLVAMTMGSGAKMKTSASVSDIIVVAKRISPRVDDVVKSMYPPLDPKLLDARTTALLLSVSHLVLVTRNACHLTGGLDWIDQSLSAAEEHLEVLREAALASEPDKGLPGPEGFLQEQSAI.

Over 1–3 the chain is Cytoplasmic; the sequence is MET. Residues 1-88 are required for interaction with MYRF; sequence METVVIVAIG…ENEDWIEDAS (88 aa). The chain crosses the membrane as a helical span at residues 4 to 24; it reads VVIVAIGVLATIFLASFAALV. At 25–226 the chain is on the extracellular side; sequence LVCRQRYCRP…EGFLQEQSAI (202 aa). The disordered stretch occupies residues 207–226; sequence SEPDKGLPGPEGFLQEQSAI.

Belongs to the TMEM98 family. In terms of assembly, interacts (via N-terminal region) with MYRF; the interaction inhibits MYRF self-cleavage. In terms of tissue distribution, widely expressed with high expression in the ovary, pancreas and prostate. Expressed in the eye, particularly in corneal endothelium, iris, ciliary body, sclera, optic nerve, optic nerve head, and retina. Expressed by activated peripheral blood mononuclear cells.

Its subcellular location is the cell membrane. It is found in the secreted. The protein localises to the extracellular exosome. It localises to the endoplasmic reticulum membrane. Functions as a negative regulator of MYRF in oligodendrocyte differentiation and myelination. Interacts with the C-terminal of MYRF inhibiting MYRF self-cleavage and N-fragment nuclear translocation. The secreted form promotes differentiation of T helper 1 cells (Th1). This chain is Transmembrane protein 98 (TMEM98), found in Homo sapiens (Human).